We begin with the raw amino-acid sequence, 33 residues long: Protamine TP14 (33 aa).

The tract at residues 1–33 (MPRRRRSSRPPVRRRRRPRVSRRRRRRGGRRRR) is disordered.

As to expression, testis.

It localises to the nucleus. The protein localises to the chromosome. Functionally, protamines substitute for histones in the chromatin of sperm during the haploid phase of spermatogenesis. They compact sperm DNA into a highly condensed, stable and inactive complex. This is Protamine TP14 from Oncorhynchus mykiss (Rainbow trout).